A 549-amino-acid polypeptide reads, in one-letter code: MTAKDILFDAEARAKLKVGVDKLANAVKVTLGPAGRNVLIDKKFGAPTSTKDGVTVAKEVELEDAFENMGAQMVREVSSKTSDVAGDGTTTATVLAQAIYREGLKNVAAGARPIDLKRGIDLAVKDVVAELREISRDITGKKEIAQVGTISANNDPEIGELIAEAMDKVGKDGVITVEEAKGMDTELTVVEGMQFDRGYLSPYFVTNSEKMDADLEDPYILIYDKKISNMKELLPVLEKTAQSGRPLMIIAEDIEGEALATLVVNKLRGTLKVCAVKAPGFGDRRKAMLEDIAILTGGTVISEEKGYKLENATISYLGQAASITVDKDNTTIVDGKGQADDIKARIGEIKGQIEKSTSDYDTEKLQERLAKLSGGVAVLNIGASTEVEMKEKKARVEDALHATRAAVQEGIVAGGGVALIRAAKALDATNPENEDQKTGVDIIRRALEEPLRQIVANTGTTDGAVVVEKVKNSEGDYGFNARTEEYMNLIEAGVVDPTKVTRTALENAASVAGILLTTEAAITDIKEDGSDMPPMPGGMGGMGGMGGMM.

ATP contacts are provided by residues 30–33 (TLGP), Lys51, 87–91 (DGTTT), Gly415, and Asp496.

This sequence belongs to the chaperonin (HSP60) family. As to quaternary structure, forms a cylinder of 14 subunits composed of two heptameric rings stacked back-to-back. Interacts with the co-chaperonin GroES.

Its subcellular location is the cytoplasm. It carries out the reaction ATP + H2O + a folded polypeptide = ADP + phosphate + an unfolded polypeptide.. Its function is as follows. Together with its co-chaperonin GroES, plays an essential role in assisting protein folding. The GroEL-GroES system forms a nano-cage that allows encapsulation of the non-native substrate proteins and provides a physical environment optimized to promote and accelerate protein folding. This is Chaperonin GroEL from Prosthecochloris aestuarii (strain DSM 271 / SK 413).